The following is a 334-amino-acid chain: Malate dehydrogenase 2 (334 aa).

12–18 (GAAGRVA) contacts NAD(+). The substrate site is built by Arg93 and Arg99. Residues Asn106, Gln113, and 130–132 (VGN) each bind NAD(+). 2 residues coordinate substrate: Asn132 and Arg166. His191 acts as the Proton acceptor in catalysis.

The protein belongs to the LDH/MDH superfamily. MDH type 2 family.

It catalyses the reaction (S)-malate + NAD(+) = oxaloacetate + NADH + H(+). Its function is as follows. Catalyzes the reversible oxidation of malate to oxaloacetate. This chain is Malate dehydrogenase 2, found in Albidiferax ferrireducens (strain ATCC BAA-621 / DSM 15236 / T118) (Rhodoferax ferrireducens).